Consider the following 297-residue polypeptide: DNA processing protein DprA (297 aa).

It belongs to the DprA/Smf family. Interacts with RecA. Interacts with ComFA and ComFC.

Its subcellular location is the cytoplasm. In terms of biological role, protein that helps load RecA onto ssDNA during transformation. Binds cooperatively to circular ssDNA, is able to bridge different segments of DNA. Favors the loading of RecA onto SsbA- or SsbB-coated ssDNA and formation of RecA-DNA filaments. RecA-ATP cannot catalyze homologous DNA strand exchange; SsbA and DprA activate strand exchange by RecA-ATP. The sequence is that of DNA processing protein DprA from Bacillus subtilis (strain 168).